Reading from the N-terminus, the 233-residue chain is uncharacterized protein (233 aa).

This sequence belongs to the asfivirus H233R family.

This is an uncharacterized protein from African swine fever virus (isolate Tick/South Africa/Pretoriuskop Pr4/1996) (ASFV).